The chain runs to 324 residues: MSVEDGGMPGLARPKQARWTLMLFLSTAMYGAHAPFLALCHVDGRVPFRPSSAVLLTELTKLLLCAFSLLVGWQTWPQGTPPWRQAAPFALSALLYGANNNLVIYLQRYMDPSTYQVLSNLKIGSTALLYCLCLGHRLSARQGLALLLLMAAGACYASGGFQEPGNTLPGPRSAAGARPMPLHITPLGLLLLILYCLISGLSSVYTELIMKRQRLPLALQNLFLYTFGVILNLGLYAGSGPGPGFLEGFSGWAVLVVLNQAVNGLLMSAVMKHGSSITRLFIVSCSLVVNAVLSAVLLQLQLTATFFLAALLIGLAVCLYYGSP.

Residues 1–18 (MSVEDGGMPGLARPKQAR) lie on the Cytoplasmic side of the membrane. Residues 19–39 (WTLMLFLSTAMYGAHAPFLAL) traverse the membrane as a helical segment. Residues 40–52 (CHVDGRVPFRPSS) are Lumenal-facing. The helical transmembrane segment at 53–73 (AVLLTELTKLLLCAFSLLVGW) threads the bilayer. Over 74–85 (QTWPQGTPPWRQ) the chain is Cytoplasmic. The chain crosses the membrane as a helical span at residues 86–106 (AAPFALSALLYGANNNLVIYL). At 107–142 (QRYMDPSTYQVLSNLKIGSTALLYCLCLGHRLSARQ) the chain is on the lumenal side. The helical transmembrane segment at 143–163 (GLALLLLMAAGACYASGGFQE) threads the bilayer. Residues 164–180 (PGNTLPGPRSAAGARPM) lie on the Cytoplasmic side of the membrane. Residues 181-201 (PLHITPLGLLLLILYCLISGL) traverse the membrane as a helical segment. Topologically, residues 202 to 214 (SSVYTELIMKRQR) are lumenal. The chain crosses the membrane as a helical span at residues 215–235 (LPLALQNLFLYTFGVILNLGL). At 236–248 (YAGSGPGPGFLEG) the chain is on the cytoplasmic side. The helical transmembrane segment at 249-271 (FSGWAVLVVLNQAVNGLLMSAVM) threads the bilayer. Topologically, residues 272–279 (KHGSSITR) are lumenal. The chain crosses the membrane as a helical span at residues 280–300 (LFIVSCSLVVNAVLSAVLLQL). Topologically, residues 301 to 324 (QLTATFFLAALLIGLAVCLYYGSP) are cytoplasmic.

Belongs to the nucleotide-sugar transporter family. SLC35A subfamily. As to quaternary structure, found in a complex with SLC35A2 and SLC35A3. In terms of tissue distribution, expressed in the kidney, lung, testis, and prostate. Expressed in the brain by sets of neurons, such as the pyramidal cells of the cortex, the Purkinje cells of the cerebellum, and the motoneurons of the brainstem.

It localises to the golgi apparatus membrane. It carries out the reaction CDP-L-ribitol(in) + CDP(out) = CDP-L-ribitol(out) + CDP(in). In terms of biological role, mediates the transport of CDP-ribitol. Does not exhibit CMP-sialic acid, UDP-galactose and UDP-N-acetylglucosamine transport activity. In Rattus norvegicus (Rat), this protein is Probable UDP-sugar transporter protein SLC35A4.